A 264-amino-acid polypeptide reads, in one-letter code: Protein hob3 (264 aa).

The region spanning 17-237 is the BAR domain; that stretch reads VMMKTGHVER…FDNSVREDYS (221 aa). 2 coiled-coil regions span residues 25–65 and 165–187; these read ERTV…AMTA and RTEK…LVSE.

The protein localises to the cytoplasm. Its subcellular location is the cytoskeleton. Involved in cytokinesis and septation where it has a role in the localization of F-actin. In Schizosaccharomyces pombe (strain 972 / ATCC 24843) (Fission yeast), this protein is Protein hob3 (hob3).